Here is a 314-residue protein sequence, read N- to C-terminus: Olfactory receptor 1468 (314 aa).

At 1 to 25 the chain is on the extracellular side; sequence MTEENQTVISQFLLLGLPIPSEHQH. The N-linked (GlcNAc...) asparagine glycan is linked to N5. The helical transmembrane segment at 26–49 threads the bilayer; sequence VFYALFLSMYLTTVLGNLIIIILI. Topologically, residues 50–57 are cytoplasmic; that stretch reads HLDSHLHT. A helical transmembrane segment spans residues 58 to 79; sequence PMYLFLSNLSFSDLCFSSVTMP. Residues 80–100 lie on the Extracellular side of the membrane; sequence KLLQNMQSQVPSIPFAGCLTQ. A disulfide bridge connects residues C97 and C189. The chain crosses the membrane as a helical span at residues 101–120; it reads LYFYLYFADLESFLLVAMAY. The Cytoplasmic segment spans residues 121–139; that stretch reads DRYVAICFPLHYMSIMSPK. The helical transmembrane segment at 140–158 threads the bilayer; that stretch reads LCVSLVVLSWVLTTFHAML. The Extracellular segment spans residues 159–196; sequence HTLLMARLSFCADNMIPHFFCDISPLLKLSCSDTHVNE. A helical membrane pass occupies residues 197–219; it reads LVIFVMGGLVIVIPFVLIIVSYA. The Cytoplasmic segment spans residues 220–236; that stretch reads RVVASILKVPSVRGIHK. Residues 237–260 traverse the membrane as a helical segment; it reads IFSTCGSHLSVVSLFYGTIIGLYL. The Extracellular portion of the chain corresponds to 261-272; the sequence is CPSANNSTVKET. Residues 273-292 form a helical membrane-spanning segment; it reads VMAMMYTVVTPMLNPFIYSL. The Cytoplasmic portion of the chain corresponds to 293 to 314; it reads RNRDMKEALIRVLCKKKITFCL.

It belongs to the G-protein coupled receptor 1 family. In terms of tissue distribution, olfactory epithelium.

It is found in the cell membrane. Odorant receptor. The sequence is that of Olfactory receptor 1468 (Olr1468) from Rattus norvegicus (Rat).